We begin with the raw amino-acid sequence, 159 residues long: Ribosomal RNA large subunit methyltransferase H (159 aa).

S-adenosyl-L-methionine is bound by residues Leu-76, Gly-108, and 127-132 (FSKMTF).

This sequence belongs to the RNA methyltransferase RlmH family. As to quaternary structure, homodimer.

Its subcellular location is the cytoplasm. The enzyme catalyses pseudouridine(1915) in 23S rRNA + S-adenosyl-L-methionine = N(3)-methylpseudouridine(1915) in 23S rRNA + S-adenosyl-L-homocysteine + H(+). In terms of biological role, specifically methylates the pseudouridine at position 1915 (m3Psi1915) in 23S rRNA. This Halalkalibacterium halodurans (strain ATCC BAA-125 / DSM 18197 / FERM 7344 / JCM 9153 / C-125) (Bacillus halodurans) protein is Ribosomal RNA large subunit methyltransferase H.